The chain runs to 62 residues: Large ribosomal subunit protein uL30 (62 aa).

Belongs to the universal ribosomal protein uL30 family. As to quaternary structure, part of the 50S ribosomal subunit.

This is Large ribosomal subunit protein uL30 from Pseudoalteromonas atlantica (strain T6c / ATCC BAA-1087).